The primary structure comprises 253 residues: N-acetylglucosaminyl-phosphatidylinositol de-N-acetylase (253 aa).

The chain crosses the membrane as a helical span at residues 3–23 (VAAPLLCLAAAVLVWGVLWVW). The Cytoplasmic segment spans residues 24–253 (GSWERMTRPE…YMRINSLNFL (230 aa)).

This sequence belongs to the PIGL family.

It is found in the endoplasmic reticulum membrane. It carries out the reaction a 6-(N-acetyl-alpha-D-glucosaminyl)-1-(1,2-diacyl-sn-glycero-3-phospho)-1D-myo-inositol + H2O = a 6-(alpha-D-glucosaminyl)-1-(1,2-diacyl-sn-glycero-3-phospho)-1D-myo-inositol + acetate. It participates in glycolipid biosynthesis; glycosylphosphatidylinositol-anchor biosynthesis. Its function is as follows. Catalyzes the second step of glycosylphosphatidylinositol (GPI) biosynthesis, which is the de-N-acetylation of N-acetylglucosaminyl-phosphatidylinositol. This chain is N-acetylglucosaminyl-phosphatidylinositol de-N-acetylase (PIGL), found in Bos taurus (Bovine).